Here is a 367-residue protein sequence, read N- to C-terminus: MSVNRILVINPGSTSTKIGVFDNERPVLEETIRHDVEQIGKYKRIIDQYEFRKETILEVLHSHGINISKLNAVCGRGGLLRPIEGGTYTVNDAMLEDLKNGFSGHHASNLGGILAYEIASGLNIPAFIVDPVVVDEMEPVARISGIAGMERKSIFHALNQKAVARKVAEQLNHKYEDLNLLVTHMGGGITVGAHKKGRVVDVNNGLNGEGPFSPERAGTVPVGQLVEMCFSGEYYRDEMIKKLVGQGGLVSLIGTNDAIKVEKMVEKGDPEATLIYKAMAYQVAKEIGGASAVLHGKIDAIVLTGGLAYSKILVDEIKERVDWIADVIVHPGEDELEALAEGALRVLREEEAPKEYVVREKETVARG.

The protein belongs to the acetokinase family.

It localises to the cytoplasm. The catalysed reaction is butanoate + ATP = butanoyl phosphate + ADP. The polypeptide is Probable butyrate kinase (Bacillus cereus (strain G9842)).